Here is a 423-residue protein sequence, read N- to C-terminus: G-protein coupled receptor 83 (423 aa).

The N-terminal stretch at 1–17 (MKVPPVLLLFLLSSVRA) is a signal peptide. Over 18 to 71 (TEQPQVVTEHPSMEAALTGPNASSHFWANYTFSDWQNFVGRRRYGAESQNPTVK) the chain is Extracellular. 2 N-linked (GlcNAc...) asparagine glycosylation sites follow: asparagine 38 and asparagine 46. Residues 72–92 (ALLIVAYSFTIVFSLFGNVLV) form a helical membrane-spanning segment. At 93–107 (CHVIFKNQRMHSATS) the chain is on the cytoplasmic side. The helical transmembrane segment at 108–129 (LFIVNLAVADIMITLLNTPFTL) threads the bilayer. Residues 130-145 (VRFVNSTWVFGKGMCH) are Extracellular-facing. N-linked (GlcNAc...) asparagine glycosylation is present at asparagine 134. Residues cysteine 144 and cysteine 224 are joined by a disulfide bond. A helical transmembrane segment spans residues 146–167 (VSRFAQYCSLHVSALTLTAIAV). Topologically, residues 168–186 (DRHQVIMHPLKPRISITKG) are cytoplasmic. Residues 187–208 (VIYIAVIWVMATFFSLPHAICQ) traverse the membrane as a helical segment. The Extracellular portion of the chain corresponds to 209–238 (KLFTFKYSEDIVRSLCLPDFPEPADLFWKY). A helical membrane pass occupies residues 239–260 (LDLATFILLYLLPLFIISVAYA). Topologically, residues 261 to 293 (RVAKKLWLCNTIGDVTTEQYLALRRKKKTTVKM) are cytoplasmic. A helical transmembrane segment spans residues 294–315 (LVLVVVLFALCWFPLNCYVLLL). The Extracellular portion of the chain corresponds to 316-327 (SSKAIHTNNALY). A helical membrane pass occupies residues 328-348 (FAFHWFAMSSTCYNPFIYCWL). Residues 349–423 (NENFRVELKA…SSVEPVVAMS (75 aa)) lie on the Cytoplasmic side of the membrane. The tract at residues 389 to 423 (SHGRRAPLPNHHLPSSQIQSGKTDLSSVEPVVAMS) is disordered. The segment covering 401-414 (LPSSQIQSGKTDLS) has biased composition (polar residues).

The protein belongs to the G-protein coupled receptor 1 family. As to expression, predominantly expressed in the brain, with moderate expression in the hypothalamus. Expressed in the thymus.

Its subcellular location is the cell membrane. G-protein coupled receptor for PEN, a neuropeptide produced from the precursor protein, proSAAS (encoded by PCSK1N). Acts through a G(i)- and G(q)-alpha-alpha-mediated pathway in response to PEN. Plays a role in food intake and body weight regulation. May contribute to the regulation of anxiety-related behaviors. This chain is G-protein coupled receptor 83, found in Mus musculus (Mouse).